Consider the following 226-residue polypeptide: Ornithine decarboxylase antizyme (226 aa).

The protein belongs to the ODC antizyme family. As to quaternary structure, interacts with ODC and thereby sterically blocks ODC homodimerization.

In terms of biological role, ornithine decarboxylase (ODC) antizyme protein that negatively regulates ODC activity and intracellular polyamine biosynthesis in response to increased intracellular polyamine levels. Binds to ODC monomers, inhibiting the assembly of the functional ODC homodimer, and targets the monomers for ubiquitin-independent proteolytic destruction by the 26S proteasome. This chain is Ornithine decarboxylase antizyme (spa1), found in Schizosaccharomyces japonicus (Fission yeast).